Consider the following 351-residue polypeptide: UDP-3-O-acylglucosamine N-acyltransferase (351 aa).

Histidine 240 (proton acceptor) is an active-site residue.

Belongs to the transferase hexapeptide repeat family. LpxD subfamily. As to quaternary structure, homotrimer.

The enzyme catalyses a UDP-3-O-[(3R)-3-hydroxyacyl]-alpha-D-glucosamine + a (3R)-hydroxyacyl-[ACP] = a UDP-2-N,3-O-bis[(3R)-3-hydroxyacyl]-alpha-D-glucosamine + holo-[ACP] + H(+). The protein operates within bacterial outer membrane biogenesis; LPS lipid A biosynthesis. Catalyzes the N-acylation of UDP-3-O-acylglucosamine using 3-hydroxyacyl-ACP as the acyl donor. Is involved in the biosynthesis of lipid A, a phosphorylated glycolipid that anchors the lipopolysaccharide to the outer membrane of the cell. The chain is UDP-3-O-acylglucosamine N-acyltransferase from Pseudomonas savastanoi pv. phaseolicola (strain 1448A / Race 6) (Pseudomonas syringae pv. phaseolicola (strain 1448A / Race 6)).